Here is a 477-residue protein sequence, read N- to C-terminus: Actin-related protein 7 (477 aa).

It belongs to the actin family. As to quaternary structure, forms a heterodimer with ARP9. Interacts with NPL6. Component of the two forms of the RSC complex composed of at least either RSC1 or RSC2, and ARP7, ARP9, LDB7, NPL6, RSC3, RSC30, RSC4, RSC58, RSC6, RSC8, RSC9, SFH1, STH1, HTL1 and probably RTT102. The complexes interact with histone and histone variant components of centromeric chromatin. Component of the SWI/SNF global transcription activator complex. The 1.14 MDa SWI/SNF complex is composed of 11 different subunits: one copy each of SWI1, SNF2/SWI2, SNF5, SNF12/SWP73, ARP7/SWP61, ARP9/SWP59; two copies each of SWI3, SNF6, SNF11, SWP82; and three copies of TAF14/SWP29.

Its subcellular location is the nucleus. In terms of biological role, component of the chromatin structure remodeling complex (RSC), which is involved in transcription regulation and nucleosome positioning. RSC is responsible for the transfer of a histone octamer from a nucleosome core particle to naked DNA. The reaction requires ATP and involves an activated RSC-nucleosome intermediate. Remodeling reaction also involves DNA translocation, DNA twist and conformational change. As a reconfigurer of centromeric and flanking nucleosomes, RSC complex is required both for proper kinetochore function in chromosome segregation and, via a PKC1-dependent signaling pathway, for organization of the cellular cytoskeleton. This subunit is involved in transcriptional regulation. Heterodimer of ARP7 and ARP9 functions with HMG box proteins to facilitate proper chromatin architecture. Heterodimer formation is necessary for assembly into RSC complex. Part of the SWI/SNF complex, an ATP-dependent chromatin remodeling complex, is required for the positive and negative regulation of gene expression of a large number of genes. It changes chromatin structure by altering DNA-histone contacts within a nucleosome, leading eventually to a change in nucleosome position, thus facilitating or repressing binding of gene-specific transcription factors. This Saccharomyces cerevisiae (strain ATCC 204508 / S288c) (Baker's yeast) protein is Actin-related protein 7 (ARP7).